The primary structure comprises 533 residues: Non-specific phospholipase C1 (533 aa).

A signal peptide spans 1 to 22 (MAFRRVLTTVILFCYLLISSQS).

This sequence belongs to the bacterial phospholipase C family. In terms of tissue distribution, expressed in roots, leaves, stems, flowers and siliques.

The protein localises to the secreted. The chain is Non-specific phospholipase C1 (NPC1) from Arabidopsis thaliana (Mouse-ear cress).